Consider the following 322-residue polypeptide: Probable transcription factor KAN3 (322 aa).

Positions 1–35 (MELFPSQPDLYLKISRRREEEQEKESQELQEQEVE) are disordered. Over residues 17 to 35 (RREEEQEKESQELQEQEVE) the composition is skewed to basic and acidic residues. Residues 161–221 (GVRAPRMRWT…HLQMYRTIKS (61 aa)) enclose the HTH myb-type domain. The segment at residues 192 to 217 (PKSVLELMDVQDLTLAHVKSHLQMYR) is a DNA-binding region (H-T-H motif). 2 disordered regions span residues 222–244 (TEKP…NSER) and 267–322 (KASS…NLSP). 2 stretches are compositionally biased toward polar residues: residues 224-241 (KPTT…SQVN) and 299-322 (LTGT…NLSP).

In terms of tissue distribution, expressed in developing phloem.

The protein localises to the nucleus. Probable transcription factor that regulates lateral organ polarity. Plays a role in lateral root formation and development. This Arabidopsis thaliana (Mouse-ear cress) protein is Probable transcription factor KAN3 (KAN3).